Here is a 194-residue protein sequence, read N- to C-terminus: dTTP/UTP pyrophosphatase (194 aa).

The active-site Proton acceptor is the D76.

Belongs to the Maf family. YhdE subfamily. It depends on a divalent metal cation as a cofactor.

The protein localises to the cytoplasm. The catalysed reaction is dTTP + H2O = dTMP + diphosphate + H(+). The enzyme catalyses UTP + H2O = UMP + diphosphate + H(+). Nucleoside triphosphate pyrophosphatase that hydrolyzes dTTP and UTP. May have a dual role in cell division arrest and in preventing the incorporation of modified nucleotides into cellular nucleic acids. This Shewanella oneidensis (strain ATCC 700550 / JCM 31522 / CIP 106686 / LMG 19005 / NCIMB 14063 / MR-1) protein is dTTP/UTP pyrophosphatase.